A 210-amino-acid polypeptide reads, in one-letter code: Probable membrane protein Rv1733c (210 aa).

The next 2 helical transmembrane spans lie at 43-63 (AVVM…AAAA) and 165-185 (ALAA…LLAL).

The protein localises to the cell membrane. This is Probable membrane protein Rv1733c from Mycobacterium tuberculosis (strain ATCC 25618 / H37Rv).